Consider the following 254-residue polypeptide: MTILPISAFSDNYIWTFIDKIAGVLDCVDPGEAGPIIRFAQSNQLTLRTILLTHHHYDHIGGVDLLIKQWPSCKVYGPIDERINNVTHPIKQGQSVQVGSLHFHILFNPGHTSTHISYYEPQQGWLFCGDTLFSAGCGRVFDGTIEELHESLLLFKKLPRNTKVFCAHEYTLQNLKFAHTVEPCNSSVINYMQQILKQPSPCTLPSNIDLELSINPFLRTDKEQVKQYALSHGANSSDSLDVFKVLRNQKNSFK.

Zn(2+) contacts are provided by His54, His56, Asp58, His59, His111, Asp130, and His168.

Belongs to the metallo-beta-lactamase superfamily. Glyoxalase II family. In terms of assembly, monomer. Requires Zn(2+) as cofactor.

It catalyses the reaction an S-(2-hydroxyacyl)glutathione + H2O = a 2-hydroxy carboxylate + glutathione + H(+). It participates in secondary metabolite metabolism; methylglyoxal degradation; (R)-lactate from methylglyoxal: step 2/2. Functionally, thiolesterase that catalyzes the hydrolysis of S-D-lactoyl-glutathione to form glutathione and D-lactic acid. The chain is Hydroxyacylglutathione hydrolase from Legionella pneumophila (strain Paris).